The following is a 390-amino-acid chain: Guanidine hydrolase (390 aa).

Residues His174, Asp199, His201, Asp203, Asp291, and Asp293 each coordinate Ni(2+).

Belongs to the arginase family. Homohexamer. The cofactor is Ni(2+).

Its subcellular location is the cytoplasm. The catalysed reaction is guanidine + H2O = urea + NH4(+). With respect to regulation, activation of GdmH depends on the presence of the accessory proteins GhaA (Sll1078) and GhaB (Sll1079), which load nickel into the active site. Hydrolase activity is slightly activated in the presence of GTP. It does not require ATP or NAD(P)H. Addition of Ca(2+), Mn(2+), Fe(2+) or Fe(3+) has no consistent effects, whereas addition of Co(2+), Cu(2+) or Zn(2+) inhibits the activity. Its function is as follows. Catalyzes the hydrolysis of guanidine into urea and ammonium. Is highly specific for free guanidine. At pH 8, also catalyzes the release of urea from methylguanidine but with significantly reduced specific activity compared with that for guanidine. Cannot hydrolyze guanidinoacetate, guanidinopropionate, guanidinobutyrate, agmatine, arginine or creatine. Required to use guanidine as the sole nitrogen source for growth. Overexpression of the gene accelerates guanidine degradation and promotes biomass growth. In Synechocystis sp. (strain ATCC 27184 / PCC 6803 / Kazusa), this protein is Guanidine hydrolase.